The chain runs to 198 residues: Transmembrane protein 9B (198 aa).

The N-terminal stretch at 1 to 33 (MATLWGGLLRLGSLLSLSCLALSVLLLAQLSDA) is a signal peptide. Residue Asn60 is glycosylated (N-linked (GlcNAc...) asparagine). The chain crosses the membrane as a helical span at residues 105–125 (IIIYLSILGLLLLYMVYLTLV). A phosphoserine mark is found at Ser142 and Ser189.

This sequence belongs to the TMEM9 family. In terms of processing, N-glycosylated.

The protein resides in the lysosome membrane. It localises to the early endosome membrane. Functionally, enhances production of pro-inflammatory cytokines induced by TNF, IL1B, and TLR ligands. Has a role in TNF activation of both the NF-kappaB and MAPK pathways. The protein is Transmembrane protein 9B (TMEM9B) of Homo sapiens (Human).